Here is a 78-residue protein sequence, read N- to C-terminus: UPF0291 protein Ldb1355 (78 aa).

Belongs to the UPF0291 family.

The protein localises to the cytoplasm. The sequence is that of UPF0291 protein Ldb1355 from Lactobacillus delbrueckii subsp. bulgaricus (strain ATCC 11842 / DSM 20081 / BCRC 10696 / JCM 1002 / NBRC 13953 / NCIMB 11778 / NCTC 12712 / WDCM 00102 / Lb 14).